We begin with the raw amino-acid sequence, 408 residues long: tRNA-specific 2-thiouridylase MnmA (408 aa).

ATP-binding positions include 38-45 and methionine 64; that span reads GMSGGVDS. Positions 124–126 are interaction with target base in tRNA; that stretch reads NPD. The active-site Nucleophile is cysteine 129. Cysteine 129 and cysteine 231 are disulfide-bonded. Glycine 153 serves as a coordination point for ATP. An interaction with tRNA region spans residues 181 to 183; the sequence is KDQ. The active-site Cysteine persulfide intermediate is cysteine 231. The segment at 348–349 is interaction with tRNA; that stretch reads RY.

It belongs to the MnmA/TRMU family.

The protein resides in the cytoplasm. The enzyme catalyses S-sulfanyl-L-cysteinyl-[protein] + uridine(34) in tRNA + AH2 + ATP = 2-thiouridine(34) in tRNA + L-cysteinyl-[protein] + A + AMP + diphosphate + H(+). Functionally, catalyzes the 2-thiolation of uridine at the wobble position (U34) of tRNA, leading to the formation of s(2)U34. This Psychrobacter cryohalolentis (strain ATCC BAA-1226 / DSM 17306 / VKM B-2378 / K5) protein is tRNA-specific 2-thiouridylase MnmA.